The following is a 122-amino-acid chain: Large ribosomal subunit protein uL18 (122 aa).

Belongs to the universal ribosomal protein uL18 family. In terms of assembly, part of the 50S ribosomal subunit; part of the 5S rRNA/L5/L18/L25 subcomplex. Contacts the 5S and 23S rRNAs.

This is one of the proteins that bind and probably mediate the attachment of the 5S RNA into the large ribosomal subunit, where it forms part of the central protuberance. This is Large ribosomal subunit protein uL18 from Thermotoga neapolitana (strain ATCC 49049 / DSM 4359 / NBRC 107923 / NS-E).